Here is a 79-residue protein sequence, read N- to C-terminus: MKNGIHPDYKKFLIKVGSDVFETMSTHPAGEILMDVDFRKHPAWNKDIGNVVNQSNKSISDFNKRFSGLSFGSQKKEAS.

Belongs to the bacterial ribosomal protein bL31 family. Type A subfamily. In terms of assembly, part of the 50S ribosomal subunit.

In terms of biological role, binds the 23S rRNA. The protein is Large ribosomal subunit protein bL31 (rpmE) of Rickettsia bellii (strain RML369-C).